Reading from the N-terminus, the 425-residue chain is MSFNLLDLPIVPRQKALKYLEPIDLFELSLCSKRMAQSVRDLKIEASAHFITLTRGQSSVHVQFKERSRAIWWDFKEIFMKKDLKDKRKIGYILFENCEKFRRGAFTLDEFYCHFDNLEEGAAAVSKHFQFLFPGPLNILLSPTVYRHLEFLFFEPSIQKCESFEMCGADIPAKRTMNRIFDKLTIEKKLCIRPKTSENYVIKQALRVEELFLRSARWMTREHLLELNCIVADLSDHNFQCSDFEAFAEKWMNNKSSKVENLRFQWQSDVEFKLENLKTSRWDSTRRERNYIFTMKNESVQIDCSDGFELERNDGRLATFVVEQQEDRTHILYFLVWIELFPEKKRLENLPKTLGPLYKQLEKINRDYPDESSLERLLSNPNLVYTEFLETYKVLKNMDGENRSPSTGQAFRRTIFDKIYNTIDL.

One can recognise an F-box domain in the interval 2–53 (SFNLLDLPIVPRQKALKYLEPIDLFELSLCSKRMAQSVRDLKIEASAHFITL).

This is an uncharacterized protein from Caenorhabditis elegans.